The primary structure comprises 347 residues: Probable dual-specificity RNA methyltransferase RlmN (347 aa).

Glu90 (proton acceptor) is an active-site residue. The Radical SAM core domain occupies Tyr96–Asp326. Cysteines 103 and 331 form a disulfide. Cys110, Cys114, and Cys117 together coordinate [4Fe-4S] cluster. S-adenosyl-L-methionine contacts are provided by residues Gly157 to Glu158, Ser189, Ser212 to His214, and Asn288. Cys331 functions as the S-methylcysteine intermediate in the catalytic mechanism.

The protein belongs to the radical SAM superfamily. RlmN family. [4Fe-4S] cluster is required as a cofactor.

It localises to the cytoplasm. The catalysed reaction is adenosine(2503) in 23S rRNA + 2 reduced [2Fe-2S]-[ferredoxin] + 2 S-adenosyl-L-methionine = 2-methyladenosine(2503) in 23S rRNA + 5'-deoxyadenosine + L-methionine + 2 oxidized [2Fe-2S]-[ferredoxin] + S-adenosyl-L-homocysteine. It catalyses the reaction adenosine(37) in tRNA + 2 reduced [2Fe-2S]-[ferredoxin] + 2 S-adenosyl-L-methionine = 2-methyladenosine(37) in tRNA + 5'-deoxyadenosine + L-methionine + 2 oxidized [2Fe-2S]-[ferredoxin] + S-adenosyl-L-homocysteine. In terms of biological role, specifically methylates position 2 of adenine 2503 in 23S rRNA and position 2 of adenine 37 in tRNAs. In Clostridium botulinum (strain Alaska E43 / Type E3), this protein is Probable dual-specificity RNA methyltransferase RlmN.